The chain runs to 103 residues: Large ribosomal subunit protein uL24 (103 aa).

Belongs to the universal ribosomal protein uL24 family. As to quaternary structure, part of the 50S ribosomal subunit.

Functionally, one of two assembly initiator proteins, it binds directly to the 5'-end of the 23S rRNA, where it nucleates assembly of the 50S subunit. Its function is as follows. One of the proteins that surrounds the polypeptide exit tunnel on the outside of the subunit. This Agathobacter rectalis (strain ATCC 33656 / DSM 3377 / JCM 17463 / KCTC 5835 / VPI 0990) (Eubacterium rectale) protein is Large ribosomal subunit protein uL24.